We begin with the raw amino-acid sequence, 321 residues long: uncharacterized protein (321 aa).

Belongs to the NAD(P)-dependent epimerase/dehydratase family.

This is an uncharacterized protein from Staphylococcus aureus (strain MRSA252).